Consider the following 367-residue polypeptide: Alanine racemase (367 aa).

Lysine 35 (proton acceptor; specific for D-alanine) is an active-site residue. Residue lysine 35 is modified to N6-(pyridoxal phosphate)lysine. Arginine 130 contributes to the substrate binding site. The Proton acceptor; specific for L-alanine role is filled by tyrosine 256. Residue methionine 304 participates in substrate binding.

It belongs to the alanine racemase family. It depends on pyridoxal 5'-phosphate as a cofactor.

The enzyme catalyses L-alanine = D-alanine. It participates in amino-acid biosynthesis; D-alanine biosynthesis; D-alanine from L-alanine: step 1/1. Its function is as follows. Catalyzes the interconversion of L-alanine and D-alanine. May also act on other amino acids. This Methylibium petroleiphilum (strain ATCC BAA-1232 / LMG 22953 / PM1) protein is Alanine racemase (alr).